The chain runs to 38 residues: Large ribosomal subunit protein bL36 (38 aa).

This sequence belongs to the bacterial ribosomal protein bL36 family.

This chain is Large ribosomal subunit protein bL36, found in Streptococcus agalactiae serotype III (strain NEM316).